The chain runs to 329 residues: Vitamin B12 import system permease protein BtuC (329 aa).

9 consecutive transmembrane segments (helical) span residues 22–42, 64–84, 91–111, 115–135, 149–169, 187–207, 243–263, 277–297, and 305–325; these read LSVL…QWIA, LAVL…QALF, PGLL…VLLG, LPGW…TLIL, LLAG…AIYF, GGVD…SLWI, GWMV…GLVI, ALLP…DVIA, and ELPI…WLLL.

This sequence belongs to the binding-protein-dependent transport system permease family. FecCD subfamily. In terms of assembly, the complex is composed of two ATP-binding proteins (BtuD), two transmembrane proteins (BtuC) and a solute-binding protein (BtuF).

The protein localises to the cell inner membrane. Functionally, part of the ABC transporter complex BtuCDF involved in vitamin B12 import. Involved in the translocation of the substrate across the membrane. The sequence is that of Vitamin B12 import system permease protein BtuC from Citrobacter koseri (strain ATCC BAA-895 / CDC 4225-83 / SGSC4696).